The primary structure comprises 361 residues: Phosphoserine aminotransferase (361 aa).

R43 lines the L-glutamate pocket. The pyridoxal 5'-phosphate site is built by W103, T153, D173, and Q196. Position 197 is an N6-(pyridoxal phosphate)lysine (K197). 238-239 contacts pyridoxal 5'-phosphate; the sequence is NT.

This sequence belongs to the class-V pyridoxal-phosphate-dependent aminotransferase family. SerC subfamily. In terms of assembly, homodimer. It depends on pyridoxal 5'-phosphate as a cofactor.

The protein localises to the cytoplasm. It catalyses the reaction O-phospho-L-serine + 2-oxoglutarate = 3-phosphooxypyruvate + L-glutamate. The enzyme catalyses 4-(phosphooxy)-L-threonine + 2-oxoglutarate = (R)-3-hydroxy-2-oxo-4-phosphooxybutanoate + L-glutamate. Its pathway is amino-acid biosynthesis; L-serine biosynthesis; L-serine from 3-phospho-D-glycerate: step 2/3. It functions in the pathway cofactor biosynthesis; pyridoxine 5'-phosphate biosynthesis; pyridoxine 5'-phosphate from D-erythrose 4-phosphate: step 3/5. In terms of biological role, catalyzes the reversible conversion of 3-phosphohydroxypyruvate to phosphoserine and of 3-hydroxy-2-oxo-4-phosphonooxybutanoate to phosphohydroxythreonine. This Hahella chejuensis (strain KCTC 2396) protein is Phosphoserine aminotransferase.